A 255-amino-acid chain; its full sequence is Protein PH0439 (255 aa).

Belongs to the CinA family.

This Pyrococcus horikoshii (strain ATCC 700860 / DSM 12428 / JCM 9974 / NBRC 100139 / OT-3) protein is Protein PH0439.